We begin with the raw amino-acid sequence, 20 residues long: Maximin-Ht (20 aa).

It belongs to the bombinin family. Expressed by the skin glands.

It is found in the secreted. Its function is as follows. Has antimicrobial activity. In Bombina maxima (Giant fire-bellied toad), this protein is Maximin-Ht.